Here is an 81-residue protein sequence, read N- to C-terminus: Cell division protein ZapB (81 aa).

Residues 6-80 adopt a coiled-coil conformation; sequence EVFEKLEAKV…LQALLGRMEE (75 aa). Over residues 38-47 the composition is skewed to polar residues; the sequence is SLAQDVQSAQ. The tract at residues 38–67 is disordered; sequence SLAQDVQSAQHQREELERENNHLKEQQSGW. Basic and acidic residues predominate over residues 48–62; it reads HQREELERENNHLKE.

It belongs to the ZapB family. In terms of assembly, homodimer. The ends of the coiled-coil dimer bind to each other, forming polymers. Interacts with FtsZ.

Its subcellular location is the cytoplasm. In terms of biological role, non-essential, abundant cell division factor that is required for proper Z-ring formation. It is recruited early to the divisome by direct interaction with FtsZ, stimulating Z-ring assembly and thereby promoting cell division earlier in the cell cycle. Its recruitment to the Z-ring requires functional FtsA or ZipA. The chain is Cell division protein ZapB from Citrobacter koseri (strain ATCC BAA-895 / CDC 4225-83 / SGSC4696).